Reading from the N-terminus, the 249-residue chain is Transmembrane protein 150C (249 aa).

Over 1-9 (MDGKKCSVW) the chain is Cytoplasmic. Residues 10–30 (MFLPLVFTLFTSAGLWIVYFI) traverse the membrane as a helical segment. Over 31 to 64 (AVEDDKILPLNSAARKSGVKHAPYISFAGDDPPA) the chain is Extracellular. A helical transmembrane segment spans residues 65–85 (SCVFSQVMNMAAFLALVVAVL). The Cytoplasmic segment spans residues 86 to 97 (RFIQLKPKVLNP). Residues 98-118 (WLNISGLVALCLASFGMTLLG) traverse the membrane as a helical segment. At 119–130 (NFQLTNDEEIHN) the chain is on the extracellular side. The chain crosses the membrane as a helical span at residues 131 to 151 (VGTSLTFGFGTLTCWIQAALT). Residues 152–168 (LKVNIKNEGRRAGIPRV) lie on the Cytoplasmic side of the membrane. Residues 169 to 189 (ILSAVITLCVVLYFILMAQDI) traverse the membrane as a helical segment. At 190–192 (HMY) the chain is on the extracellular side. A helical transmembrane segment spans residues 193 to 213 (AARVQWGLVMCFLAYFGTLAV). Residues 214 to 249 (EFRHYRYEIVCSEYQENFLSFSESLSEASEYQTDQV) lie on the Cytoplasmic side of the membrane.

The protein belongs to the DRAM/TMEM150 family.

It localises to the cell membrane. The protein localises to the lysosome membrane. It carries out the reaction Ca(2+)(in) = Ca(2+)(out). The catalysed reaction is Na(+)(in) = Na(+)(out). The enzyme catalyses K(+)(in) = K(+)(out). It catalyses the reaction Mg(2+)(in) = Mg(2+)(out). Nonselective cationic channel with high permeability to Ca(2+). Component of a mechanosensitive cation channel. Confers mechanically activated (MA) currents with slow inactivation kinetics. May contribute to proprioception. The protein is Transmembrane protein 150C (Tmem150c) of Rattus norvegicus (Rat).